The chain runs to 340 residues: Protein-lysine N-methyltransferase EEF2KMT (340 aa).

Met-1 bears the N-acetylmethionine mark. Residues Trp-139, 165–167 (GSG), Trp-238, and Ala-257 contribute to the S-adenosyl-L-methionine site.

Belongs to the class I-like SAM-binding methyltransferase superfamily. EEF2KMT family. In terms of assembly, interacts with FAM86B2 and FAM86C1P.

Its subcellular location is the cytoplasm. It catalyses the reaction L-lysyl-[protein] + 3 S-adenosyl-L-methionine = N(6),N(6),N(6)-trimethyl-L-lysyl-[protein] + 3 S-adenosyl-L-homocysteine + 3 H(+). Catalyzes the trimethylation of eukaryotic elongation factor 2 (EEF2) on 'Lys-525'. This chain is Protein-lysine N-methyltransferase EEF2KMT (EEF2KMT), found in Bos taurus (Bovine).